A 607-amino-acid chain; its full sequence is Monocarboxylate transporter 7 (607 aa).

Residues 1–84 (MRASGQGPQR…PAETGCSRSR (84 aa)) form a disordered region. Residues 1 to 105 (MRASGQGPQR…ANVYTQVPDG (105 aa)) are Cytoplasmic-facing. Residues 106-126 (GWGWAVAVSFFFVEVFTYGII) form a helical membrane-spanning segment. Residues 127–146 (KSFGVFFNDLMDSFDESNSK) are Extracellular-facing. Residues 147–167 (ISWIISICVFVLTFTAPLSTV) form a helical membrane-spanning segment. Residues 168–175 (LSNRFGHR) lie on the Cytoplasmic side of the membrane. Residues 176–196 (LVVMAGGLLISLGMITASFSQ) traverse the membrane as a helical segment. The Extracellular segment spans residues 197-202 (RVYHMY). Residues 203-223 (ISIGVISGLGYCFSFLPTVTI) traverse the membrane as a helical segment. At 224 to 233 (LSQYFDKRRS) the chain is on the cytoplasmic side. A helical transmembrane segment spans residues 234–254 (VVTAVASTGECFAVFAFAPAI). Residues 255–268 (TALKEHIGWRYSLL) are Extracellular-facing. The helical transmembrane segment at 269–289 (FVGLLQLNIMVCGALLRPIII) threads the bilayer. Topologically, residues 290 to 383 (QGPGQSPKAV…KEKSFICYAL (94 aa)) are cytoplasmic. Residues Ser319, Ser322, Ser325, and Ser332 each carry the phosphoserine modification. A helical membrane pass occupies residues 384–404 (FGLFATLGFFAPSLYIIPLGI). At 405 to 414 (SLGIDPDRAA) the chain is on the extracellular side. A helical membrane pass occupies residues 415 to 435 (FLLSTMAIAEVFGRIGAGFVL). Residues 436-442 (NREPIRK) are Cytoplasmic-facing. A helical membrane pass occupies residues 443 to 463 (IYIELICVILLTASLFAFTFA). Topologically, residues 464 to 465 (TE) are extracellular. Residues 466–486 (FWGLMLCSVFFGSMVGTIGGT) form a helical membrane-spanning segment. Topologically, residues 487–507 (HIPMLAEDDVVGIEKMSSAAG) are cytoplasmic. Residues 508 to 528 (VYVFIQSISGLAGPPLAGLLV) form a helical membrane-spanning segment. At 529–536 (DQSKIYSR) the chain is on the extracellular side. The helical transmembrane segment at 537–557 (AFYSCAAGMCLAAVCLALVRP) threads the bilayer. Residues 558–607 (CKKGLCQNSHSGENQTDRQRGKALQDIPEDFLEMDLGKCEHRAHMKMDPV) are Cytoplasmic-facing.

Belongs to the major facilitator superfamily. Monocarboxylate porter (TC 2.A.1.13) family. Forms functional complexes with BSG/CD147 or EMB/GP70 ancillary proteins.

Its subcellular location is the basolateral cell membrane. The enzyme catalyses taurine(out) = taurine(in). Its function is as follows. Monocarboxylate transporter selective for taurine. May associate with BSG/CD147 or EMB/GP70 ancillary proteins to mediate facilitative efflux or influx of taurine across the plasma membrane. The transport is pH- and sodium-independent. Rather low-affinity, is likely effective for taurine transport in tissues where taurine is present at high concentrations. This chain is Monocarboxylate transporter 7, found in Mus musculus (Mouse).